A 617-amino-acid chain; its full sequence is Dihydroxy-acid dehydratase (617 aa).

Mg(2+) is bound at residue D81. C122 is a [2Fe-2S] cluster binding site. Mg(2+) is bound by residues D123 and K124. K124 carries the N6-carboxylysine modification. C195 is a [2Fe-2S] cluster binding site. E491 provides a ligand contact to Mg(2+). The active-site Proton acceptor is the S517.

It belongs to the IlvD/Edd family. As to quaternary structure, homodimer. [2Fe-2S] cluster is required as a cofactor. The cofactor is Mg(2+).

It catalyses the reaction (2R)-2,3-dihydroxy-3-methylbutanoate = 3-methyl-2-oxobutanoate + H2O. The catalysed reaction is (2R,3R)-2,3-dihydroxy-3-methylpentanoate = (S)-3-methyl-2-oxopentanoate + H2O. It participates in amino-acid biosynthesis; L-isoleucine biosynthesis; L-isoleucine from 2-oxobutanoate: step 3/4. Its pathway is amino-acid biosynthesis; L-valine biosynthesis; L-valine from pyruvate: step 3/4. Functionally, functions in the biosynthesis of branched-chain amino acids. Catalyzes the dehydration of (2R,3R)-2,3-dihydroxy-3-methylpentanoate (2,3-dihydroxy-3-methylvalerate) into 2-oxo-3-methylpentanoate (2-oxo-3-methylvalerate) and of (2R)-2,3-dihydroxy-3-methylbutanoate (2,3-dihydroxyisovalerate) into 2-oxo-3-methylbutanoate (2-oxoisovalerate), the penultimate precursor to L-isoleucine and L-valine, respectively. This Buchnera aphidicola subsp. Diuraphis noxia protein is Dihydroxy-acid dehydratase.